We begin with the raw amino-acid sequence, 111 residues long: Probable monothiol glutaredoxin 2 (111 aa).

Residues 7 to 109 (LKFIQNAIKK…KMLKDETKLI (103 aa)) enclose the Glutaredoxin domain. K24 lines the glutathione pocket. C32 lines the [2Fe-2S] cluster pocket. Residues R61, F73, and 86 to 87 (CD) contribute to the glutathione site.

Belongs to the glutaredoxin family. Monothiol subfamily.

This is Probable monothiol glutaredoxin 2 (grxC2) from Rickettsia typhi (strain ATCC VR-144 / Wilmington).